The following is a 279-amino-acid chain: Undecaprenyl-diphosphatase (279 aa).

Helical transmembrane passes span 2 to 22 (LFIE…TEWL), 44 to 64 (AFME…VIVI), 85 to 105 (WQLW…AVPL), 113 to 133 (FNHM…FLWI), 163 to 183 (VLSI…AIIL), 188 to 208 (TVAA…YSGL), 225 to 245 (LLVL…VIKL), and 255 to 275 (FTVF…YSVF).

It belongs to the UppP family.

The protein resides in the cell membrane. It carries out the reaction di-trans,octa-cis-undecaprenyl diphosphate + H2O = di-trans,octa-cis-undecaprenyl phosphate + phosphate + H(+). In terms of biological role, catalyzes the dephosphorylation of undecaprenyl diphosphate (UPP). Confers resistance to bacitracin. This is Undecaprenyl-diphosphatase from Streptococcus equi subsp. equi (strain 4047).